The following is a 583-amino-acid chain: Pectinesterase/pectinesterase inhibitor U1 (583 aa).

The signal sequence occupies residues methionine 1–alanine 40. Residues serine 60–methionine 221 are pectinesterase inhibitor U1. Residues asparagine 85, asparagine 105, and asparagine 224 are each glycosylated (N-linked (GlcNAc...) asparagine). A pectinesterase U1 region spans residues aspartate 272–serine 570. Substrate is bound by residues threonine 347 and glutamine 377. Aspartate 400 acts as the Proton donor; for pectinesterase activity in catalysis. Cysteine 414 and cysteine 434 form a disulfide bridge. The active-site Nucleophile; for pectinesterase activity is the aspartate 421. Substrate is bound by residues arginine 489 and tryptophan 491.

In the N-terminal section; belongs to the PMEI family. It in the C-terminal section; belongs to the pectinesterase family.

The protein resides in the secreted. It localises to the cell wall. The catalysed reaction is [(1-&gt;4)-alpha-D-galacturonosyl methyl ester](n) + n H2O = [(1-&gt;4)-alpha-D-galacturonosyl](n) + n methanol + n H(+). Its pathway is glycan metabolism; pectin degradation; 2-dehydro-3-deoxy-D-gluconate from pectin: step 1/5. In terms of biological role, acts in the modification of cell walls via demethylesterification of cell wall pectin. The chain is Pectinesterase/pectinesterase inhibitor U1 (PMEU1) from Solanum lycopersicum (Tomato).